The primary structure comprises 740 residues: NAD(P)H-quinone oxidoreductase subunit 5, chloroplastic (740 aa).

The next 16 helical transmembrane spans lie at 9 to 29 (WIIP…LILF), 40 to 60 (WAFQ…YLSI), 89 to 109 (IDPL…MVLI), 125 to 145 (FAYM…SNLI), 147 to 167 (IYIF…FWFT), 185 to 205 (GDFG…SFEF), 219 to 239 (NEVN…GAVA), 258 to 278 (TPIS…FLVA), 286 to 306 (VIPY…LLGA), 327 to 347 (LGYM…FHLI), 354 to 374 (ALLF…VGYS), 396 to 416 (ITFL…CFWS), 425 to 445 (WLYS…TAFY), 543 to 563 (LFPI…GIPF), 602 to 622 (VLSV…YKPI), and 718 to 738 (YLFL…LFFL).

Belongs to the complex I subunit 5 family. NDH is composed of at least 16 different subunits, 5 of which are encoded in the nucleus.

The protein resides in the plastid. It localises to the chloroplast thylakoid membrane. It carries out the reaction a plastoquinone + NADH + (n+1) H(+)(in) = a plastoquinol + NAD(+) + n H(+)(out). It catalyses the reaction a plastoquinone + NADPH + (n+1) H(+)(in) = a plastoquinol + NADP(+) + n H(+)(out). Functionally, NDH shuttles electrons from NAD(P)H:plastoquinone, via FMN and iron-sulfur (Fe-S) centers, to quinones in the photosynthetic chain and possibly in a chloroplast respiratory chain. The immediate electron acceptor for the enzyme in this species is believed to be plastoquinone. Couples the redox reaction to proton translocation, and thus conserves the redox energy in a proton gradient. The polypeptide is NAD(P)H-quinone oxidoreductase subunit 5, chloroplastic (ndhF) (Atropa belladonna (Belladonna)).